Consider the following 146-residue polypeptide: Large ribosomal subunit protein uL15 (146 aa).

The tract at residues 1 to 58 is disordered; it reads MNLSNLRAPKKANRNRKRVGRGMGSGHGKTSTRGHKGQRSRSGSRSMRGFEGGQMPLH. 2 stretches are compositionally biased toward basic residues: residues 8-20 and 30-39; these read APKKANRNRKRVG and TSTRGHKGQR. Over residues 40-49 the composition is skewed to low complexity; the sequence is SRSGSRSMRG.

The protein belongs to the universal ribosomal protein uL15 family. In terms of assembly, part of the 50S ribosomal subunit.

Functionally, binds to the 23S rRNA. In Acidobacterium capsulatum (strain ATCC 51196 / DSM 11244 / BCRC 80197 / JCM 7670 / NBRC 15755 / NCIMB 13165 / 161), this protein is Large ribosomal subunit protein uL15.